The sequence spans 366 residues: MLPSQTPAQGSGRFLLLSPPSLSSHPEKLNAILGLHARESTDLQMLDRLALGLVSLPQSTYDVVLLLTGADNTLAETYRLVSRGVLQGVVNSLKPGGKLRNRDNQIWGSGSDSAAGLGSSDGGGGGGGGEKKSSSEQAFRNEAILAGLVFDDRGELAKPDFGAQQAVPLKLGRKKNLGDSAFGNGTVELPASNGVRVTAGATTTTPTTTTTTTINSSTPSGVRFIDFSDDFGVPMVEETQELDEELIDEEELLGEFDMGRPIVQPPECRPKAGKRRRACKDCTCGLSQKLEAEDRAKRANADKALETLKLGTNDLAEVDFTVQGKVGSCGNCALGDAFRCDGCPYIGLPAFKPGEEVRLLNNDVQL.

An N-terminal SAM-like domain region spans residues 8–167 (AQGSGRFLLL…KPDFGAQQAV (160 aa)). Residues 100-136 (RNRDNQIWGSGSDSAAGLGSSDGGGGGGGGEKKSSSE) form a disordered region. A compositionally biased stretch (low complexity) spans 108–118 (GSGSDSAAGLG). A compositionally biased stretch (gly residues) spans 119–128 (SSDGGGGGGG). The linker stretch occupies residues 168 to 258 (PLKLGRKKNL…EEELLGEFDM (91 aa)). C268, C279, C282, and C284 together coordinate [2Fe-2S] cluster. The fe-S binding site A stretch occupies residues 268–284 (CRPKAGKRRRACKDCTC). Residues C329, C332, C340, and C343 each coordinate [4Fe-4S] cluster. 2 short sequence motifs (cx2C motif) span residues 329–332 (CGNC) and 340–343 (CDGC). The interval 329 to 343 (CGNCALGDAFRCDGC) is fe-S binding site B.

It belongs to the anamorsin family. Monomer. Interacts with TAH18. Interacts with MIA40. [2Fe-2S] cluster serves as cofactor. Requires [4Fe-4S] cluster as cofactor.

It is found in the cytoplasm. The protein localises to the mitochondrion intermembrane space. Component of the cytosolic iron-sulfur (Fe-S) protein assembly (CIA) machinery required for the maturation of extramitochondrial Fe-S proteins. Part of an electron transfer chain functioning in an early step of cytosolic Fe-S biogenesis, facilitating the de novo assembly of a [4Fe-4S] cluster on the scaffold complex CFD1-NBP35. Electrons are transferred to DRE2 from NADPH via the FAD- and FMN-containing protein TAH18. TAH18-DRE2 are also required for the assembly of the diferric tyrosyl radical cofactor of ribonucleotide reductase (RNR), probably by providing electrons for reduction during radical cofactor maturation in the catalytic small subunit RNR2. This Paracoccidioides lutzii (strain ATCC MYA-826 / Pb01) (Paracoccidioides brasiliensis) protein is Fe-S cluster assembly protein DRE2.